An 83-amino-acid polypeptide reads, in one-letter code: Small ribosomal subunit protein bS18 (83 aa).

The protein belongs to the bacterial ribosomal protein bS18 family. As to quaternary structure, part of the 30S ribosomal subunit. Forms a tight heterodimer with protein bS6.

In terms of biological role, binds as a heterodimer with protein bS6 to the central domain of the 16S rRNA, where it helps stabilize the platform of the 30S subunit. The sequence is that of Small ribosomal subunit protein bS18 from Cytophaga hutchinsonii (strain ATCC 33406 / DSM 1761 / CIP 103989 / NBRC 15051 / NCIMB 9469 / D465).